Here is a 433-residue protein sequence, read N- to C-terminus: MTDFFAGIPQIRYEGEGSSNEFAFRHYNPDEVILGKRMEDHLRFAVAWWHSFAWPGGDPFGGQTFDRPWFGDTLDLAKLKADVAFEMFDILGAPFFCFHDADIRPEGATFAESKRNLEEIVDHIGIRMEGSKTKLLWGTANLFSHRRFMSGAATNPDPDVFAWSAATVKGCMDATMKLGGANYVLWGGREGYETLLNTDLTREAENAGRFLQMVVDYKHKIGFQGTILIEPKPQEPSKHQYDYDVATVYGFLKRFGLEKEVKLNIEQGHAILAGHSFEHELALAASLGILGSIDMNRNDYQSGWDTDQFPHNHPEMALAYYEILRAGGFTTGGTNFDAKIRRQSLDPEDLVLAHVGGMDTCARALKAAARLYEDGSLETARAARYAGWETPEAQAMLASSLEKIEARVLAEGINPEPRSGRQERLENLWNRFV.

Active-site residues include His99 and Asp102. Positions 230, 266, 269, 294, 305, 307, and 337 each coordinate Mg(2+).

This sequence belongs to the xylose isomerase family. Homotetramer. It depends on Mg(2+) as a cofactor.

The protein localises to the cytoplasm. It catalyses the reaction alpha-D-xylose = alpha-D-xylulofuranose. The sequence is that of Xylose isomerase from Cereibacter sphaeroides (strain ATCC 17023 / DSM 158 / JCM 6121 / CCUG 31486 / LMG 2827 / NBRC 12203 / NCIMB 8253 / ATH 2.4.1.) (Rhodobacter sphaeroides).